Consider the following 768-residue polypeptide: Glucoamylase S2 (768 aa).

Positions 1 to 21 are cleaved as a signal peptide; sequence MQRPFLLAYLVLSLLFNSALG. 2 disordered regions span residues 29–83 and 125–149; these read RGSS…ETTI and TTTV…PTTP. Low complexity predominate over residues 30 to 48; the sequence is GSSSSNITSSGPSSTPFSS. Residue Asn35 is glycosylated (N-linked (GlcNAc...) asparagine). Residues 49-66 show a composition bias toward polar residues; it reads ATESFSTGTTVTPSSSKY. Low complexity-rich tracts occupy residues 71-83 and 131-149; these read TETS…ETTI and STSP…PTTP. 5 N-linked (GlcNAc...) asparagine glycosylation sites follow: Asn309, Asn323, Asn415, Asn424, and Asn435. The segment at 349 to 692 is h subunit; sequence VSIERIFENI…ASTTLYQLIY (344 aa). Residue Trp456 coordinates substrate. Asn514 is a glycosylation site (N-linked (GlcNAc...) asparagine). Asp519 functions as the Proton acceptor in the catalytic mechanism. Catalysis depends on Glu522, which acts as the Proton donor. Residues Asn547, Asn646, Asn651, Asn721, and Asn742 are each glycosylated (N-linked (GlcNAc...) asparagine). Residues 693–768 are y subunit; sequence RHISEQHDLV…LKATWEQTGN (76 aa).

It belongs to the glycosyl hydrolase 15 family.

It carries out the reaction Hydrolysis of terminal (1-&gt;4)-linked alpha-D-glucose residues successively from non-reducing ends of the chains with release of beta-D-glucose.. The polypeptide is Glucoamylase S2 (STA2) (Saccharomyces cerevisiae (Baker's yeast)).